A 353-amino-acid chain; its full sequence is Histidinol-phosphate aminotransferase (353 aa).

An N6-(pyridoxal phosphate)lysine modification is found at Lys-211.

It belongs to the class-II pyridoxal-phosphate-dependent aminotransferase family. Histidinol-phosphate aminotransferase subfamily. In terms of assembly, homodimer. It depends on pyridoxal 5'-phosphate as a cofactor.

The enzyme catalyses L-histidinol phosphate + 2-oxoglutarate = 3-(imidazol-4-yl)-2-oxopropyl phosphate + L-glutamate. Its pathway is amino-acid biosynthesis; L-histidine biosynthesis; L-histidine from 5-phospho-alpha-D-ribose 1-diphosphate: step 7/9. This chain is Histidinol-phosphate aminotransferase, found in Klebsiella pneumoniae (strain 342).